The primary structure comprises 91 residues: Large ribosomal subunit protein bL27 (91 aa).

Residues 1-22 form a disordered region; sequence MAHKKAGGSSRNGRDSDGRRLG.

It belongs to the bacterial ribosomal protein bL27 family.

This chain is Large ribosomal subunit protein bL27, found in Beijerinckia indica subsp. indica (strain ATCC 9039 / DSM 1715 / NCIMB 8712).